The primary structure comprises 160 residues: Probable prefoldin subunit 5 (160 aa).

Belongs to the prefoldin subunit alpha family. In terms of assembly, heterohexamer of two PFD-alpha type and four PFD-beta type subunits.

Its function is as follows. Binds specifically to cytosolic chaperonin (c-CPN) and transfers target proteins to it. Binds to nascent polypeptide chain and promotes folding in an environment in which there are many competing pathways for nonnative proteins. This chain is Probable prefoldin subunit 5 (pfdn5), found in Dictyostelium discoideum (Social amoeba).